Here is a 723-residue protein sequence, read N- to C-terminus: MIYQAETLQVKEVQDGIAELSFCSPKSVNKLDLATLESLDKALDALKAHQGLKGLMLTSDKDAFIVGADITEFLGLFAKTDAELDQWLQFANSIFNKLEDLPVPTISVLKGHTLGGGCECVLATDMRIGDKTTSIGLPETKLGIMPGFGGCVRLPRVIGADSAMEVITQGKACRADEALKIGLLDAVVDSDALYESALKTLTSAINEKLDWQARRKQKTSPLTLSKLESMMSFTMAKGLVAQKAGPHYPAPMTAVITIEEGARFARNEALDIERKHFVKLAKSEEAKSLVGLFLNDQYIKGLAKKSAKSASKDTQRAAVLGAGIMGGGIAYQSALKGVPVLMKDIAQPSLDLGMTEASKLLNKRLSRGRIDGFKMAGILASITPSLHYTGIEESDVIVEAVVENPKVKAAVLSEVESHVGEDTVITSNTSTIPINLLAKSLKRPENFCGMHFFNPVHRMPLVEIIRGEHTSDETINRVVAYAAKMGKSPIVVNDCPGFFVNRVLFPYFGGFSMLLRDGADFTKIDKIMERKFGWPMGPAYLLDVVGIDTAHHAQAVMAQGFPERMGKQGRDAIDALFEASKYGQKNGSGFYSYTIDRKGKPKKTFSEEILPVLADVCTDKQDFDDQTIIQRMMIPMINEVVLCLQEGIIATPQEADMTLVYGLGFPPFRGGVFRYLDSVGIAEFVAMAKQYSELGAMYQVPQMLIDMAAKGESFYGAQQQGSI.

Positions methionine 1–aspartate 189 are enoyl-CoA hydratase/isomerase. Aspartate 296 serves as a coordination point for substrate. The tract at residues serine 311–isoleucine 723 is 3-hydroxyacyl-CoA dehydrogenase. NAD(+) contacts are provided by residues methionine 325, aspartate 344, valine 401 to glutamate 403, lysine 408, and serine 430. The active-site For 3-hydroxyacyl-CoA dehydrogenase activity is the histidine 451. NAD(+) is bound at residue asparagine 454. 2 residues coordinate substrate: asparagine 501 and tyrosine 661.

The protein in the N-terminal section; belongs to the enoyl-CoA hydratase/isomerase family. In the C-terminal section; belongs to the 3-hydroxyacyl-CoA dehydrogenase family. As to quaternary structure, heterotetramer of two alpha chains (FadB) and two beta chains (FadA).

The enzyme catalyses a (3S)-3-hydroxyacyl-CoA + NAD(+) = a 3-oxoacyl-CoA + NADH + H(+). It carries out the reaction a (3S)-3-hydroxyacyl-CoA = a (2E)-enoyl-CoA + H2O. The catalysed reaction is a 4-saturated-(3S)-3-hydroxyacyl-CoA = a (3E)-enoyl-CoA + H2O. It catalyses the reaction (3S)-3-hydroxybutanoyl-CoA = (3R)-3-hydroxybutanoyl-CoA. The enzyme catalyses a (3Z)-enoyl-CoA = a 4-saturated (2E)-enoyl-CoA. It carries out the reaction a (3E)-enoyl-CoA = a 4-saturated (2E)-enoyl-CoA. It functions in the pathway lipid metabolism; fatty acid beta-oxidation. In terms of biological role, involved in the aerobic and anaerobic degradation of long-chain fatty acids via beta-oxidation cycle. Catalyzes the formation of 3-oxoacyl-CoA from enoyl-CoA via L-3-hydroxyacyl-CoA. It can also use D-3-hydroxyacyl-CoA and cis-3-enoyl-CoA as substrate. The polypeptide is Fatty acid oxidation complex subunit alpha (Vibrio campbellii (strain ATCC BAA-1116)).